The sequence spans 188 residues: Probable DNA-directed RNA polymerase subunit delta (188 aa).

The region spanning 14-83 (LSMIEVARAI…GENKWGLRSW (70 aa)) is the HTH HARE-type domain. Residues 119-188 (EDAIDYSADD…EDEEDEDEEE (70 aa)) form a disordered region.

It belongs to the RpoE family. RNAP is composed of a core of 2 alpha, a beta and a beta' subunits. The core is associated with a delta subunit and one of several sigma factors.

In terms of biological role, participates in both the initiation and recycling phases of transcription. In the presence of the delta subunit, RNAP displays an increased specificity of transcription, a decreased affinity for nucleic acids, and an increased efficiency of RNA synthesis because of enhanced recycling. This Streptococcus equi subsp. zooepidemicus (strain H70) protein is Probable DNA-directed RNA polymerase subunit delta.